The following is a 377-amino-acid chain: MNAITSAPAERLVRVPLGERAYDILIGPGLIARAGAEIATRLKGRKAAVITDENVAPIYLDALTASLKAAGIQSSSLVLPAGEKTKSFEHLMTVCDAVLTARIERNDAVIALGGGVIGDLSGFAAGIVRRGVRFVQVPTSLLSQVDSSVGGKTGINTHHGKNLVGVFHQPDLVLADTDVLNTLSQREFRAGYAEVAKYGLIDKPDFFAWLEANWQDVFSGGAARIEAIAASCQAKSDVVVADERENGPRALLNLGHTFGHALEAATAYDSRRLVHGEGVAIGMVLAHEFSSRLNLASPDDAKRVDAHLKTVGLPTRMGDIPGELPPAEVLMDAIAQDKKVKSGQLTFILTRGIGQSFVADDVPSSEVLSFLKEKHPQ.

Residues 115-119 (GVIGD), 139-140 (TS), lysine 152, and lysine 161 contribute to the NAD(+) site. Zn(2+)-binding residues include glutamate 194, histidine 256, and histidine 275.

This sequence belongs to the sugar phosphate cyclases superfamily. Dehydroquinate synthase family. Requires Co(2+) as cofactor. The cofactor is Zn(2+). NAD(+) serves as cofactor.

It is found in the cytoplasm. The catalysed reaction is 7-phospho-2-dehydro-3-deoxy-D-arabino-heptonate = 3-dehydroquinate + phosphate. The protein operates within metabolic intermediate biosynthesis; chorismate biosynthesis; chorismate from D-erythrose 4-phosphate and phosphoenolpyruvate: step 2/7. Functionally, catalyzes the conversion of 3-deoxy-D-arabino-heptulosonate 7-phosphate (DAHP) to dehydroquinate (DHQ). The polypeptide is 3-dehydroquinate synthase (Rhizobium rhizogenes (strain K84 / ATCC BAA-868) (Agrobacterium radiobacter)).